Here is a 236-residue protein sequence, read N- to C-terminus: Lipid A 4'-phosphatase (236 aa).

The next 5 helical transmembrane spans lie at Phe-26–Phe-46, Phe-58–Phe-78, Tyr-134–Gly-153, Ile-160–Arg-182, and Gly-200–Met-220.

This sequence belongs to the lipid A LpxF 4'-phosphatase family.

Its subcellular location is the cell inner membrane. It functions in the pathway bacterial outer membrane biogenesis; LPS lipid A biosynthesis. Removes the 4'-phosphate group from lipid A species. Absence of phosphate groups in lipid A renders the bacteria resistant to host-derived cationic antimicrobial peptides (CAMP) and allows it to camouflage itself from the host innate immune response. Removal of the 4'-phosphate may be required to generate the substrate for deacylation of the pentaacyl lipid A to the tetraccylated lipid A species. The polypeptide is Lipid A 4'-phosphatase (Porphyromonas gingivalis (strain ATCC 33277 / DSM 20709 / CIP 103683 / JCM 12257 / NCTC 11834 / 2561)).